We begin with the raw amino-acid sequence, 197 residues long: ATP-dependent Clp protease proteolytic subunit 1 (197 aa).

S96 (nucleophile) is an active-site residue. The active site involves H121.

The protein belongs to the peptidase S14 family. In terms of assembly, fourteen ClpP subunits assemble into 2 heptameric rings which stack back to back to give a disk-like structure with a central cavity, resembling the structure of eukaryotic proteasomes.

Its subcellular location is the cytoplasm. It catalyses the reaction Hydrolysis of proteins to small peptides in the presence of ATP and magnesium. alpha-casein is the usual test substrate. In the absence of ATP, only oligopeptides shorter than five residues are hydrolyzed (such as succinyl-Leu-Tyr-|-NHMec, and Leu-Tyr-Leu-|-Tyr-Trp, in which cleavage of the -Tyr-|-Leu- and -Tyr-|-Trp bonds also occurs).. In terms of biological role, cleaves peptides in various proteins in a process that requires ATP hydrolysis. Has a chymotrypsin-like activity. Plays a major role in the degradation of misfolded proteins. The polypeptide is ATP-dependent Clp protease proteolytic subunit 1 (Synechococcus sp. (strain CC9902)).